The sequence spans 159 residues: Transcriptional repressor NrdR (159 aa).

Residues 3 to 34 (CPFCRHEDTQVVDSRVSEDGAAIRRRRRCSAC) fold into a zinc finger. Positions 49–139 (PAVVKKDGSR…VYRRFEDVSE (91 aa)) constitute an ATP-cone domain.

The protein belongs to the NrdR family. Requires Zn(2+) as cofactor.

In terms of biological role, negatively regulates transcription of bacterial ribonucleotide reductase nrd genes and operons by binding to NrdR-boxes. The polypeptide is Transcriptional repressor NrdR (Burkholderia vietnamiensis (strain G4 / LMG 22486) (Burkholderia cepacia (strain R1808))).